Here is a 357-residue protein sequence, read N- to C-terminus: D-alanine--D-alanine ligase (357 aa).

Residues 134–339 (KQLFEHRGLP…YPDLIAKLID (206 aa)) form the ATP-grasp domain. ATP is bound at residue 167-222 (NDKLTYPVFVKPANLGSSVGISKCNNEEELKSGITEAFQFDRKLVIEQGINAREIE). Mg(2+) contacts are provided by Asp293, Glu306, and Asn308.

It belongs to the D-alanine--D-alanine ligase family. It depends on Mg(2+) as a cofactor. Mn(2+) serves as cofactor.

The protein localises to the cytoplasm. The catalysed reaction is 2 D-alanine + ATP = D-alanyl-D-alanine + ADP + phosphate + H(+). The protein operates within cell wall biogenesis; peptidoglycan biosynthesis. Cell wall formation. In Staphylococcus epidermidis (strain ATCC 12228 / FDA PCI 1200), this protein is D-alanine--D-alanine ligase.